Here is a 117-residue protein sequence, read N- to C-terminus: Big defensin (117 aa).

An N-terminal signal peptide occupies residues 1–23 (MKGNIGIAVFYMLLLLLPTDSIG). A propeptide spanning residues 26 to 36 (MEEEQEKLFRQ) is cleaved from the precursor. Disulfide bonds link C83/C113, C90/C108, and C94/C114.

It belongs to the big defensin family. As to quaternary structure, interacts with intracellular coagulation inhibitor 1/LICI-1. In terms of tissue distribution, expressed in all tissues examined, including hemocytes, heart, hepatopancreas, stomach, intestine and skeletal muscle.

Its subcellular location is the secreted. Significantly inhibits the growth of Gram-negative and Gram-positive bacteria and fungi in vitro. In Tachypleus tridentatus (Japanese horseshoe crab), this protein is Big defensin.